A 304-amino-acid chain; its full sequence is MKNIVFMGTPDYASVILEAILKNGGYNVVAVFTQPDRPVGRKAILTPPEVKKTVLQSGLDIPIFQPLNLKDSSTVNDIKALKPNFIVVAAYGQILPKDILDIAPCINLHASLLPKFRGASPIQEAILRGELLSGVTAMRMGVGLDDGDILGFSVIEIPNLKSSQLFCELAKMAAKLTIKILNEFESISPIAQFHALSSKCGKVHKEDGLIDIKLQTPKIIESKFRAYYPWPGLYLENGVKIWDMEISNLKGENGYVLSIDYDGFTIGVNGGSIKIKSLQESGKKMVNAKDYINGKRLGVGSKFC.

111–114 is a (6S)-5,6,7,8-tetrahydrofolate binding site; it reads SLLP.

This sequence belongs to the Fmt family.

The catalysed reaction is L-methionyl-tRNA(fMet) + (6R)-10-formyltetrahydrofolate = N-formyl-L-methionyl-tRNA(fMet) + (6S)-5,6,7,8-tetrahydrofolate + H(+). In terms of biological role, attaches a formyl group to the free amino group of methionyl-tRNA(fMet). The formyl group appears to play a dual role in the initiator identity of N-formylmethionyl-tRNA by promoting its recognition by IF2 and preventing the misappropriation of this tRNA by the elongation apparatus. In Campylobacter fetus subsp. fetus (strain 82-40), this protein is Methionyl-tRNA formyltransferase.